Consider the following 72-residue polypeptide: DNA-directed RNA polymerase subunit epsilon (72 aa).

The protein belongs to the RNA polymerase subunit epsilon family. RNAP is composed of a core of 2 alpha, a beta and a beta' subunit. The core is associated with a delta subunit, and at least one of epsilon or omega. When a sigma factor is associated with the core the holoenzyme is formed, which can initiate transcription.

It carries out the reaction RNA(n) + a ribonucleoside 5'-triphosphate = RNA(n+1) + diphosphate. Its function is as follows. A non-essential component of RNA polymerase (RNAP). In Lactiplantibacillus plantarum (strain ATCC BAA-793 / NCIMB 8826 / WCFS1) (Lactobacillus plantarum), this protein is DNA-directed RNA polymerase subunit epsilon.